Reading from the N-terminus, the 989-residue chain is Voltage-gated delayed rectifier potassium channel KCNH1 (989 aa).

Over 1–220 (MTMAGGRRGL…LHYCVFKTTW (220 aa)) the chain is Cytoplasmic. Residues 14-94 (QNTFLENIVR…QTFENYEMNS (81 aa)) form the PAS domain. Residues 93-145 (NSFEILMYKKNRTPVWFFVKIAPIRNEQDKVVLFLCTFSDITAFKQPIEDDSC) form the PAC domain. Residues 151–162 (FARLTRALTSSR) form a required for phosphatidylinositol bisphosphate binding region. The chain crosses the membrane as a helical span at residues 221-241 (DWIILILTFYTAILVPYNVSF). Residues 242–248 (KTRQNNV) are Extracellular-facing. The helical transmembrane segment at 249-269 (AWLVVDSIVDVIFLVDIVLNF) threads the bilayer. The Cytoplasmic segment spans residues 270-290 (HTTFVGPAGEVISDPKLIRMN). A helical membrane pass occupies residues 291-309 (YLKTWFVIDLLSCLPYDVI). Residues 310–345 (NAFENVDEVSAFMGDPGKIGFADQIPPPLEGRESQG) lie on the Extracellular side of the membrane. Residues 346 to 368 (ISSLFSSLKVVRLLRLGRVARKL) traverse the membrane as a helical; Voltage-sensor segment. Over 369 to 377 (DHYIEYGAA) the chain is Cytoplasmic. A helical transmembrane segment spans residues 378–399 (VLVLLVCVFGLAAHWMACIWYS). The Extracellular segment spans residues 400–448 (IGDYEIFDEDTKTIRNNSWLYQLAMDIGTPYQFNGSGSGKWEGGPSKNS). N-linked (GlcNAc...) asparagine glycans are attached at residues asparagine 415 and asparagine 433. The segment at residues 449-470 (VYISSLYFTMTSLTSVGFGNIA) is an intramembrane region (pore-forming). The Selectivity filter signature appears at 463 to 468 (SVGFGN). The Extracellular segment spans residues 471–477 (PSTDIEK). A helical transmembrane segment spans residues 478 to 498 (IFAVAIMMIGSLLYATIFGNV). Topologically, residues 499-989 (TTIFQQMYAN…ESERDIFGAS (491 aa)) are cytoplasmic. The calmodulin-binding stretch occupies residues 673-770 (KRDALQKVLE…LDDLDVEKGN (98 aa)). The tract at residues 699-701 (YNL) is interaction with cyclic nucleotide-binding pocket. Basic and acidic residues predominate over residues 855-879 (KAESMETLPERTKASGEATLKKTDS). Disordered regions lie at residues 855–886 (KAES…GITK) and 962–989 (RSSQ…FGAS). The CAD (involved in subunit assembly) stretch occupies residues 924–964 (ATVLEVRHELKEDIKALNAKMTNIEKQLSEILRILTSRRSS). Residues serine 974, serine 978, and serine 981 each carry the phosphoserine modification. A compositionally biased stretch (basic and acidic residues) spans 980-989 (ESERDIFGAS).

Belongs to the potassium channel family. H (Eag) (TC 1.A.1.20) subfamily. Kv10.1/KCNH1 sub-subfamily. As to quaternary structure, homomultimer. The potassium channel is composed of a homo- or heterotetrameric complex of pore-forming alpha subunits that can associate with modulating beta subunits. Heteromultimer with KCNH5/EAG2. Interacts with ALG10B. Interacts with RABEP1. Interacts (via C-terminus) with CTTN. Interacts (via C-terminal cytoplasmic region) with Ca(2+)-bound calmodulin. Interacts with the spider kappa-theraphotoxin-Aa1a and mu/kappa-theraphotoxin-Ap1a. In terms of processing, channel activity is regulated via tyrosine phosphorylation/dephosphorylation by SRC and PTPN6. In terms of tissue distribution, highly expressed in brain and in myoblasts at the onset of fusion, but not in other tissues. Detected in HeLa (cervical carcinoma), SH-SY5Y (neuroblastoma) and MCF-7 (epithelial tumor) cells, but not in normal epithelial cells.

The protein resides in the cell membrane. Its subcellular location is the nucleus inner membrane. It localises to the cell projection. The protein localises to the dendrite. It is found in the axon. The protein resides in the presynaptic cell membrane. Its subcellular location is the perikaryon. It localises to the postsynaptic density membrane. The protein localises to the early endosome membrane. It carries out the reaction K(+)(in) = K(+)(out). Its activity is regulated as follows. Channel activity is inhibited by interaction with Ca(2+)-bound calmodulin. Interaction of a single pore-forming alpha subunit with a calmodulin chain is sufficient to promote channel closure. Channel activity is not regulated by cyclic nucleotides. Channel activity is inhibited by binding intracellular phosphatidylinositol-3,5-bisphosphate and phosphatidylinositol-4,5-bisphosphate (PIP2), but is not inhibited by phosphatidylinositol 4-phosphate. Inhibited by the spider kappa-theraphotoxin-Aa1a and mu/kappa-theraphotoxin-Ap1a. Functionally, pore-forming (alpha) subunit of a voltage-gated delayed rectifier potassium channel that mediates outward-rectifying potassium currents which, on depolarization, reaches a steady-state level and do not inactivate. The activation kinetics depend on the prepulse potential and external divalent cation concentration. With negative prepulses, the current activation is delayed and slowed down several fold, whereas more positive prepulses speed up activation. The time course of activation is biphasic with a fast and a slowly activating current component. Activates at more positive membrane potentials and exhibit a steeper activation curve. Channel properties are modulated by subunit assembly. Mediates IK(NI) current in myoblasts. Involved in the regulation of cell proliferation and differentiation, in particular adipogenic and osteogenic differentiation in bone marrow-derived mesenchymal stem cells (MSCs). The chain is Voltage-gated delayed rectifier potassium channel KCNH1 from Homo sapiens (Human).